Consider the following 369-residue polypeptide: MNQSDSSLMDLPLEIHLSLLEYVPNELRAVNKYFYVLHNHSYKEKSLAWIAEDNYIWAVVKHSLCLYVKSLDPLRQHAREIIQETKEPGFNVPLCMTKYIADSWYIVYNALQYPGKIINMGWDKYTKSQDSNGSDSTSNFNSRPKERTLMQSLTALPVNFWSRRKDEPTPVNVWFYVKNAHVARYIPKIITEIGICNYGPKQIVASAGYINELITSEGIYCVNLGHLPRLYDEQIFEGTGTTHLPLELKAIDRTDSDVCINGDLVLLGYDFIPYQISKPWLLFRIEPVNSIEAIFNYSECSFSYQFAWSLACLQSEEKISFPRDTIIGHGLPYKPSKLIRIFVYKHPEQKQDLGQEIALPNWNTPYLRR.

The F-box domain occupies 8 to 45 (LMDLPLEIHLSLLEYVPNELRAVNKYFYVLHNHSYKEK).

As to quaternary structure, component of the SCF(UCC1) E3 ubiquitin-protein ligase complex composed of CDC53, SKP1, RBX1 and UCC1. Interacts with CIT2. Post-translationally, monoubiquitinated by UBC4.

Its pathway is protein modification; protein ubiquitination. In terms of biological role, substrate recognition component of the SKP1-CUL1-F-box protein E3 ubiquitin-protein ligase complex SCF(UCC1) which mediates the ubiquitination and subsequent proteasomal degradation of target proteins. The SCF(UCC1) complex acts as a metabolic switch for the glyoxylate cycle and regulates the level of CIT2 protein to maintain citrate homeostasis. The sequence is that of F-box protein UCC1 (UCC1) from Saccharomyces cerevisiae (strain ATCC 204508 / S288c) (Baker's yeast).